We begin with the raw amino-acid sequence, 156 residues long: Small ribosomal subunit protein uS7 (156 aa).

Belongs to the universal ribosomal protein uS7 family. Part of the 30S ribosomal subunit. Contacts proteins S9 and S11.

Functionally, one of the primary rRNA binding proteins, it binds directly to 16S rRNA where it nucleates assembly of the head domain of the 30S subunit. Is located at the subunit interface close to the decoding center, probably blocks exit of the E-site tRNA. The chain is Small ribosomal subunit protein uS7 from Bradyrhizobium sp. (strain BTAi1 / ATCC BAA-1182).